The chain runs to 242 residues: Endoplasmic reticulum membrane protein complex subunit 7 (242 aa).

The N-terminal stretch at 1-23 (MAAALWGFFPVLLLLLLSGDVQS) is a signal peptide. At 24-159 (SEVPGAAAEG…IKRESWGWTD (136 aa)) the chain is on the lumenal side. The chain crosses the membrane as a helical span at residues 160–180 (FLMNPMVMMMVLPLLIFVLLP). Residues 181–242 (KVVNTSDPDM…TGKSGAGKRR (62 aa)) lie on the Cytoplasmic side of the membrane. A disordered region spans residues 217 to 242 (LFSSKSSGKSSSGSSKTGKSGAGKRR). A compositionally biased stretch (low complexity) spans 219–235 (SSKSSGKSSSGSSKTGK).

Belongs to the EMC7 family. Component of the ER membrane protein complex (EMC).

The protein resides in the endoplasmic reticulum membrane. Its function is as follows. Part of the endoplasmic reticulum membrane protein complex (EMC) that enables the energy-independent insertion into endoplasmic reticulum membranes of newly synthesized membrane proteins. Preferentially accommodates proteins with transmembrane domains that are weakly hydrophobic or contain destabilizing features such as charged and aromatic residues. Involved in the cotranslational insertion of multi-pass membrane proteins in which stop-transfer membrane-anchor sequences become ER membrane spanning helices. It is also required for the post-translational insertion of tail-anchored/TA proteins in endoplasmic reticulum membranes. By mediating the proper cotranslational insertion of N-terminal transmembrane domains in an N-exo topology, with translocated N-terminus in the lumen of the ER, controls the topology of multi-pass membrane proteins like the G protein-coupled receptors. By regulating the insertion of various proteins in membranes, it is indirectly involved in many cellular processes. In Homo sapiens (Human), this protein is Endoplasmic reticulum membrane protein complex subunit 7 (EMC7).